We begin with the raw amino-acid sequence, 626 residues long: FAD-binding monooxygenase moxY (626 aa).

The segment covering 1-23 (MAPFLSAHGESASSSSSSSPTPS) has biased composition (low complexity). The segment at 1-47 (MAPFLSAHGESASSSSSSSPTPSRHTRNQHVDYSTPGSTGYNIPQNT) is disordered. A compositionally biased stretch (polar residues) spans 31–47 (VDYSTPGSTGYNIPQNT). FAD contacts are provided by residues 96-99 (TWLE), 108-109 (DI), and Tyr114. 106 to 108 (GCD) serves as a coordination point for NADP(+). NADP(+) contacts are provided by residues 243-249 (SGASSIQ) and 266-267 (RT).

It belongs to the FAD-binding monooxygenase family. FAD is required as a cofactor.

Its pathway is mycotoxin biosynthesis. Functionally, FAD-binding monooxygenase; part of the fragmented gene cluster that mediates the biosynthesis of dothistromin (DOTH), a polyketide toxin very similar in structure to the aflatoxin precursor, versicolorin B. The first step of the pathway is the conversion of acetate to norsolorinic acid (NOR) and requires the fatty acid synthase subunits hexA and hexB, as well as the polyketide synthase pksA. PksA combines a hexanoyl starter unit and 7 malonyl-CoA extender units to synthesize the precursor NOR. The hexanoyl starter unit is provided to the acyl-carrier protein (ACP) domain by the fungal fatty acid synthase hexA/hexB. The second step is the conversion of NOR to averantin (AVN) and requires the norsolorinic acid ketoreductase nor1, which catalyzes the dehydration of norsolorinic acid to form (1'S)-averantin. The cytochrome P450 monooxygenase avnA then catalyzes the hydroxylation of AVN to 5'hydroxyaverantin (HAVN). The next step is performed by adhA that transforms HAVN to averufin (AVF). Averufin might then be converted to hydroxyversicolorone by cypX and avfA. Hydroxyversicolorone is further converted versiconal hemiacetal acetate (VHA) by moxY. VHA is then the substrate for the versiconal hemiacetal acetate esterase est1 to yield versiconal (VAL). Versicolorin B synthase vbsA then converts VAL to versicolorin B (VERB) by closing the bisfuran ring. Then, the activity of the versicolorin B desaturase verB leads to versicolorin A (VERA). DotB, a predicted chloroperoxidase, may perform epoxidation of the A-ring of VERA. Alternatively, a cytochrome P450, such as cypX or avnA could catalyze this step. It is also possible that another, uncharacterized, cytochrome P450 enzyme is responsible for this step. Opening of the epoxide could potentially be achieved by the epoxide hydrolase epoA. However, epoA seems not to be required for DOTH biosynthesis, but other epoxide hydrolases may have the ability to complement this hydrolysis. Alternatively, opening of the epoxide ring could be achieved non-enzymatically. The next step is the deoxygenation of ring A to yield the 5,8-dihydroxyanthraquinone which is most likely catalyzed by the NADPH dehydrogenase encoded by ver1. The last stages of DOTH biosynthesis are proposed to involve hydroxylation of the bisfuran. OrdB and norB might have oxidative roles here. An alternative possibility is that cytochrome P450 monoogenases such as avnA and cypX might perform these steps in addition to previously proposed steps. This Dothistroma septosporum (Red band needle blight fungus) protein is FAD-binding monooxygenase moxY.